The sequence spans 186 residues: Peptidyl-tRNA hydrolase (186 aa).

Residue Y13 participates in tRNA binding. H18 (proton acceptor) is an active-site residue. Residues Y59, N61, and N107 each contribute to the tRNA site.

It belongs to the PTH family. In terms of assembly, monomer.

The protein localises to the cytoplasm. It carries out the reaction an N-acyl-L-alpha-aminoacyl-tRNA + H2O = an N-acyl-L-amino acid + a tRNA + H(+). In terms of biological role, hydrolyzes ribosome-free peptidyl-tRNAs (with 1 or more amino acids incorporated), which drop off the ribosome during protein synthesis, or as a result of ribosome stalling. Catalyzes the release of premature peptidyl moieties from peptidyl-tRNA molecules trapped in stalled 50S ribosomal subunits, and thus maintains levels of free tRNAs and 50S ribosomes. The protein is Peptidyl-tRNA hydrolase of Thermotoga petrophila (strain ATCC BAA-488 / DSM 13995 / JCM 10881 / RKU-1).